The primary structure comprises 1363 residues: MSEFHRLYFDELLFDFPDLVKVQKDSYASFVGGGDAVSSINDIFASVFPVNDGYGRASLEFVSCRMGEPKHDEYGCVERGITYSAPLRAILRLVVFGDETSGEGGEGVSTEPAVKDVREQEIYMGDIPIMSKNGTFIINGVERVVVSQMHRAPGVFFDNDKARSISGKLNYIARIIPYRGSWLDFEFDAKDVLYFRIDKKRKLPVTLLLRALGLSNKDIFAQFCEVSECRLTKDGKWTVCFVPERFKGVRLQYDLINAETGELVLAKGNRISIVLARNLYAKGLRYCYMDLEVMKDMYLADDLVSAKGEVLLPHGTRLTKEHVAKLEFLDVDSIKLVELKGNYIFSTVLQYDCSYEEAMLSIYRVIRPGEIPSIESAEKLFESLFFSPERYDLLNVGRIRLNAKFNLSHDESLTVLTKEDIFCTVRELALLQREVGDVDDIDHLGNSALGLRRVRSVGEFMDNQFRIGLVRMAKVIVENMATADFDTVMPCEMINSKILGAVIREFFMSSALSQFMDQTNPLSEITHKRRISALGPGGLNRGRAGFEVRDVHTTHYGRICATETPEGATIGLINSLAIYAKINKYGFIETPYRYVRDGRVTDEVTYLSAIDEIKANICQASVRVDEEGYILDDLVYCRRNYENVFIPRSEVQFADVSAKQIVSVAASLIPFLENDDANRALMGSNMQRQAVPLIVPEAPLVGTGMEGYVARGSGAVIVAKRAGIVQYIDARNIVVASESKDDFWIDSYTLCKFRKSNHNTCIHQRCVVYQGQRVKKGDILADGPAIQQGELALGRNLVVAFLSWRGYNFEDSVVISSNVVRDDLFTSVHLEGFECVVRDTRLGPEEITRDVSGVAEEFLHCLDEFGIACVGANVEAGDVLVGKVTPKSSSPVTPEEKLLRAIFGEKAIDVKDSSLYLPPGVSGCVVDVKVLQRRGIEKVGRALLIEKQAIDAEKARRDHELAVLTNYIYSLLKEMLVGKVALNTLAPISKGDLITGEALEKIDRESWWKLSVDEISSIKLLRQRFVDRFDEINKTYEENFEKIRGDDDLAQGVLMVVKVFVAVKHTLQPGDKMSGRHGNKGVISRIVPAEDMPYLADGTPVDIILNPLGVPSRMNVGQILETHLGWAAYNLGKKISKLLDEGNYSEVKSLILEIYKNDRKMMARLKRMTDTEIVEYSRSLRRGVPVAASVFEGPKTDEIERLLVLAGKDPSGQEVLYDGVTGEKFDRKVTVGCKYMLKLHHLVNDKIHARSIGSYSLITQQPLGGKSHFGGQRFGEMECWALQAYGATFALQEMLTIKSDDVVGRVNVYDSIVRGDNDFYYGVPESFNVMMNELRALCLNVEFCSDLERKEDFSDLPLAVSGR.

It belongs to the RNA polymerase beta chain family. The RNAP catalytic core consists of 2 alpha, 1 beta, 1 beta' and 1 omega subunit. When a sigma factor is associated with the core the holoenzyme is formed, which can initiate transcription.

The catalysed reaction is RNA(n) + a ribonucleoside 5'-triphosphate = RNA(n+1) + diphosphate. Its function is as follows. DNA-dependent RNA polymerase catalyzes the transcription of DNA into RNA using the four ribonucleoside triphosphates as substrates. In Neorickettsia risticii (Ehrlichia risticii), this protein is DNA-directed RNA polymerase subunit beta.